Consider the following 132-residue polypeptide: Large ribosomal subunit protein bL17 (132 aa).

Belongs to the bacterial ribosomal protein bL17 family. In terms of assembly, part of the 50S ribosomal subunit. Contacts protein L32.

The polypeptide is Large ribosomal subunit protein bL17 (Polaromonas sp. (strain JS666 / ATCC BAA-500)).